The primary structure comprises 108 residues: Iron-sulfur cluster assembly protein CyaY (108 aa).

Belongs to the frataxin family.

Involved in iron-sulfur (Fe-S) cluster assembly. May act as a regulator of Fe-S biogenesis. This Burkholderia orbicola (strain MC0-3) protein is Iron-sulfur cluster assembly protein CyaY.